The sequence spans 441 residues: Homogentisate 1,2-dioxygenase (441 aa).

The active-site Proton acceptor is His-287. Fe cation-binding residues include His-330 and Glu-336. Positions 345 and 366 each coordinate homogentisate. A Fe cation-binding site is contributed by His-366.

This sequence belongs to the homogentisate dioxygenase family. Hexamer; dimer of trimers. Requires Fe cation as cofactor.

It catalyses the reaction homogentisate + O2 = 4-maleylacetoacetate + H(+). It participates in amino-acid degradation; L-phenylalanine degradation; acetoacetate and fumarate from L-phenylalanine: step 4/6. Its function is as follows. Involved in the catabolism of homogentisate (2,5-dihydroxyphenylacetate or 2,5-OH-PhAc), a central intermediate in the degradation of phenylalanine and tyrosine. Catalyzes the oxidative ring cleavage of the aromatic ring of homogentisate to yield maleylacetoacetate. In Xanthomonas oryzae pv. oryzae (strain KACC10331 / KXO85), this protein is Homogentisate 1,2-dioxygenase.